Consider the following 483-residue polypeptide: Cobyric acid synthase (483 aa).

A GATase cobBQ-type domain is found at 248-435 (LLKVVVPVLP…LHGLFETPAA (188 aa)). The Nucleophile role is filled by C329. H427 is an active-site residue.

This sequence belongs to the CobB/CobQ family. CobQ subfamily.

It functions in the pathway cofactor biosynthesis; adenosylcobalamin biosynthesis. In terms of biological role, catalyzes amidations at positions B, D, E, and G on adenosylcobyrinic A,C-diamide. NH(2) groups are provided by glutamine, and one molecule of ATP is hydrogenolyzed for each amidation. This is Cobyric acid synthase from Pseudomonas fluorescens (strain ATCC BAA-477 / NRRL B-23932 / Pf-5).